The primary structure comprises 262 residues: Cerebellar degeneration-related antigen 1 (262 aa).

Tandem repeats lie at residues 3-8 (WLEDVD), 9-14 (FLEDVP), 15-20 (LLEDIP), 21-26 (LLEDVP), 27-32 (LLEDVP), 33-38 (LLEDTS), 39-44 (RLEDIN), 45-50 (LMEDMA), 51-56 (LLEDVD), 57-62 (LLEDTD), 63-68 (FLEDLD), 69-74 (FSEAMD), 75-80 (LREDKD), 81-86 (FLEDMD), 87-92 (SLEDMA), 93-98 (LLEDVD), 99-104 (LLEDTD), 105-110 (FLEDPD), 111-116 (FLEAID), 117-122 (LREDKD), 123-128 (FLEDMD), 129-134 (SLEDLE), 135-140 (AIGRCG), 141-146 (FSGRHG), 147-152 (FFGRRR), 153-158 (FSGRPK), 159-164 (LSGRLG), 165-170 (LLGRRG), 171-176 (FSGRLG), 177-182 (GYWKTW), 183-188 (IFWKTW), 189-194 (IFWKTW), 195-200 (IFRKTY), and 201-206 (IGWKTW). The segment at 3–140 (WLEDVDFLED…EDLEAIGRCG (138 aa)) is 23 X 6 AA approximate repeats. The interval 141-176 (FSGRHGFFGRRRFSGRPKLSGRLGLLGRRGFSGRLG) is 6 X 6 AA approximate repeats. Residues 177-206 (GYWKTWIFWKTWIFWKTWIFRKTYIGWKTW) form a 5 X 6 AA approximate repeats region.

In terms of tissue distribution, brain; predominantly expressed in normal neuroectodermal tissues and in certain malignant tumors.

The protein is Cerebellar degeneration-related antigen 1 (CDR1) of Homo sapiens (Human).